The primary structure comprises 152 residues: Ribonuclease H (152 aa).

The RNase H type-1 domain maps to 1–142 (MKEVTIYTDG…CDELARAAIA (142 aa)). Residues Asp-9, Glu-47, Asp-69, and Asp-134 each coordinate Mg(2+).

It belongs to the RNase H family. In terms of assembly, monomer. It depends on Mg(2+) as a cofactor.

It is found in the cytoplasm. The enzyme catalyses Endonucleolytic cleavage to 5'-phosphomonoester.. Functionally, endonuclease that specifically degrades the RNA of RNA-DNA hybrids. The sequence is that of Ribonuclease H from Moorella thermoacetica (strain ATCC 39073 / JCM 9320).